Reading from the N-terminus, the 229-residue chain is Cytochrome c oxidase assembly factor 7 (229 aa).

Sel1-like repeat units follow at residues 34–66 (PEGCHRLADYLEGVKKNYESTAQVLQHNCEVNA), 68–104 (AQSCYKLGAYHVTGKGGMKKCLKTAYSCFLKSCNTQG), 108–145 (VDACHNVGLLAQDGRALETGPDTTVARQYFEKACEGGF), 146–182 (APSCFNLSTLYIQGFPGLDKSMPLALKYALKACDLGH), and 183–218 (VWGCANASRMYKLGDGTDKDEQRAEELKNRAKDLHG). The tract at residues 197–229 (DGTDKDEQRAEELKNRAKDLHGQEKERQLKFGE) is disordered.

Belongs to the hcp beta-lactamase family.

It localises to the mitochondrion intermembrane space. Its function is as follows. May be required for assembly of mitochondrial respiratory chain complexes. The sequence is that of Cytochrome c oxidase assembly factor 7 (coa7) from Danio rerio (Zebrafish).